The following is a 607-amino-acid chain: UvrABC system protein C (607 aa).

Residues 11 to 89 (CKPGVYRFED…IKEFAPPCNV (79 aa)) form the GIY-YIG domain. The region spanning 201–236 (SSLLESLKKKMLKASKNKEYEEAAILRDKIQAAQTV) is the UVR domain.

Belongs to the UvrC family. As to quaternary structure, interacts with UvrB in an incision complex.

It localises to the cytoplasm. Its function is as follows. The UvrABC repair system catalyzes the recognition and processing of DNA lesions. UvrC both incises the 5' and 3' sides of the lesion. The N-terminal half is responsible for the 3' incision and the C-terminal half is responsible for the 5' incision. The polypeptide is UvrABC system protein C (Tropheryma whipplei (strain TW08/27) (Whipple's bacillus)).